The chain runs to 104 residues: MSPDPHEDLGDVLTEPTQKTERPRMFKVLLHNDDYTTMEFVVGVLQRVFNKSVPEATRIMLNVHNRGVGVAGVYTAEVAETKIETVHSMAQADGFPLKCSMEPE.

The interval Met1 to Thr20 is disordered.

Belongs to the ClpS family. As to quaternary structure, binds to the N-terminal domain of the chaperone ClpA.

Functionally, involved in the modulation of the specificity of the ClpAP-mediated ATP-dependent protein degradation. The sequence is that of ATP-dependent Clp protease adapter protein ClpS from Desulfatibacillum aliphaticivorans.